Consider the following 186-residue polypeptide: Mitochondrial import inner membrane translocase subunit Tim22 (186 aa).

2 disulfides stabilise this stretch: C61-C133 and C152-C171. Transmembrane regions (helical) follow at residues 66–86, 117–135, and 162–182; these read ALACVGGFVLGGAFGVFTAGI, YAKNFAIVGAMFSCTECLV, and AGLKAGALGCGGFAAFSAVID.

This sequence belongs to the Tim17/Tim22/Tim23 family. In terms of assembly, core component of the TIM22 complex.

The protein localises to the mitochondrion inner membrane. Functionally, essential core component of the TIM22 complex, a complex that mediates the import and insertion of multi-pass transmembrane proteins into the mitochondrial inner membrane. In the TIM22 complex, it constitutes the voltage-activated and signal-gated channel. Forms a twin-pore translocase that uses the membrane potential as external driving force in 2 voltage-dependent steps. The chain is Mitochondrial import inner membrane translocase subunit Tim22 (timm22) from Xenopus tropicalis (Western clawed frog).